The sequence spans 932 residues: Isoleucine--tRNA ligase (932 aa).

Residues 57–67 carry the 'HIGH' region motif; it reads PYANGDIHIGT. L-isoleucyl-5'-AMP is bound at residue E559. The 'KMSKS' region signature appears at 600–604; the sequence is KMSKS. K603 is an ATP binding site. Zn(2+) is bound by residues C899, C902, C919, and C922.

It belongs to the class-I aminoacyl-tRNA synthetase family. IleS type 1 subfamily. Monomer. The cofactor is Zn(2+).

It localises to the cytoplasm. The catalysed reaction is tRNA(Ile) + L-isoleucine + ATP = L-isoleucyl-tRNA(Ile) + AMP + diphosphate. In terms of biological role, catalyzes the attachment of isoleucine to tRNA(Ile). As IleRS can inadvertently accommodate and process structurally similar amino acids such as valine, to avoid such errors it has two additional distinct tRNA(Ile)-dependent editing activities. One activity is designated as 'pretransfer' editing and involves the hydrolysis of activated Val-AMP. The other activity is designated 'posttransfer' editing and involves deacylation of mischarged Val-tRNA(Ile). The protein is Isoleucine--tRNA ligase of Thermoanaerobacter pseudethanolicus (strain ATCC 33223 / 39E) (Clostridium thermohydrosulfuricum).